A 320-amino-acid polypeptide reads, in one-letter code: ADP/ATP translocase 4 (320 aa).

Residues 1–20 (MSNESSKKQSSKKALFDPVS) lie on the Mitochondrial intermembrane side of the membrane. A Solcar 1 repeat occupies 19-111 (VSFSKDLLAG…FAFKDKYKEL (93 aa)). The chain crosses the membrane as a helical span at residues 21–50 (FSKDLLAGGVAAAVSKTAVAPIERVKLLLQ). Over 51 to 87 (VQASSKQISPEARYKGMLDCLVRIPREQGFLSYWRGN) the chain is Mitochondrial matrix. A helical transmembrane segment spans residues 88 to 112 (LANVIRYFPTQALNFAFKDKYKELF). 2 residues coordinate ADP: R93 and K105. The Mitochondrial intermembrane portion of the chain corresponds to 113 to 122 (MSGVNKEKQF). Residues 123-143 (WRWFLANLASGGAAGATSLCV) traverse the membrane as a helical segment. Solcar repeat units follow at residues 124–214 (RWFL…VKGL) and 221–308 (TPFL…IKEF). Topologically, residues 144–191 (VYPLDFARTRLGVDIGKGPEQRQFTGLGDCIMKIAKSDGLIGLYQGFG) are mitochondrial matrix. A helical transmembrane segment spans residues 192-212 (VSVQGIIVYRASYFGAYDTVK). Topologically, residues 213 to 223 (GLLPKPKETPF) are mitochondrial intermembrane. A helical membrane pass occupies residues 224–244 (LVSFIIAQIVTTCSGILSYPF). Residues 245-284 (DTVRRRMMMQSGESDRQYKGTIDCFLKIYRHEGVPAFFRG) lie on the Mitochondrial matrix side of the membrane. An ADP-binding site is contributed by R248. An important for transport activity region spans residues 248–253 (RRRMMM). Residues 248–253 (RRRMMM) carry the Nucleotide carrier signature motif motif. Residues 285–302 (AFSNILRGTGGALVLVLY) form a helical membrane-spanning segment. The Mitochondrial intermembrane portion of the chain corresponds to 303 to 320 (DKIKEFLNIDVGGSSSGD).

The protein belongs to the mitochondrial carrier (TC 2.A.29) family. As to quaternary structure, monomer. As to expression, specifically expressed in undifferentiated embryonic stem cells and germ cells. Expression is down-regulated after embryonic stem cells differentiation. In adults, only expressed in developing gametes in testis. In testis, expressed at higher level in spermatocytes. Expression is probably associated with entry of the male germ cells into meiosis. Expressed at very low level in Sertoli cells.

The protein localises to the mitochondrion inner membrane. The protein resides in the membrane. It localises to the cell projection. Its subcellular location is the cilium. It is found in the flagellum membrane. It carries out the reaction ADP(in) + ATP(out) = ADP(out) + ATP(in). It catalyses the reaction dATP(out) + ADP(in) = dATP(in) + ADP(out). The catalysed reaction is dADP(in) + ADP(out) = dADP(out) + ADP(in). The enzyme catalyses H(+)(in) = H(+)(out). With respect to regulation, the matrix-open state (m-state) is inhibited by the membrane-permeable bongkrekic acid (BKA). The cytoplasmic-open state (c-state) is inhibited by the membrane-impermeable toxic inhibitor carboxyatractyloside (CATR). Proton transporter activity is inhibited by ADP:ATP antiporter activity. In terms of biological role, ADP:ATP antiporter that mediates import of ADP into the mitochondrial matrix for ATP synthesis, and export of ATP out to fuel the cell. Cycles between the cytoplasmic-open state (c-state) and the matrix-open state (m-state): operates by the alternating access mechanism with a single substrate-binding site intermittently exposed to either the cytosolic (c-state) or matrix (m-state) side of the inner mitochondrial membrane. Specifically required during spermatogenesis, probably to mediate ADP:ATP exchange in spermatocytes. Large ATP supplies from mitochondria may be critical for normal progression of spermatogenesis during early stages of meiotic prophase I, including DNA double-strand break repair and chromosomal synapsis. In addition to its ADP:ATP antiporter activity, also involved in mitochondrial uncoupling and mitochondrial permeability transition pore (mPTP) activity. Plays a role in mitochondrial uncoupling by acting as a proton transporter: proton transport uncouples the proton flows via the electron transport chain and ATP synthase to reduce the efficiency of ATP production and cause mitochondrial thermogenesis. Proton transporter activity is inhibited by ADP:ATP antiporter activity, suggesting that SLC25A31/ANT4 acts as a master regulator of mitochondrial energy output by maintaining a delicate balance between ATP production (ADP:ATP antiporter activity) and thermogenesis (proton transporter activity). Proton transporter activity requires free fatty acids as cofactor, but does not transport it. Among nucleotides, may also exchange ADP for dATP and dADP. Also plays a key role in mPTP opening, a non-specific pore that enables free passage of the mitochondrial membranes to solutes of up to 1.5 kDa, and which contributes to cell death. It is however unclear if SLC25A31/ANT4 constitutes a pore-forming component of mPTP or regulates it. This chain is ADP/ATP translocase 4, found in Mus musculus (Mouse).